Consider the following 257-residue polypeptide: uncharacterized protein (257 aa).

The chain crosses the membrane as a helical span at residues 6–26 (IFWLNLAAIIIISIVVSGGMF).

The protein belongs to the staphylococcal tandem lipoprotein family.

It localises to the cell membrane. This is an uncharacterized protein from Staphylococcus aureus (strain MSSA476).